The sequence spans 751 residues: Disintegrin and metalloproteinase domain-containing protein 2 (751 aa).

Positions 1-16 (MLRVLFLLCGLSGLRT) are cleaved as a signal peptide. Positions 17 to 173 (KENSERLHVQ…PYKVQSVQPR (157 aa)) are excised as a propeptide. At 17–702 (KENSERLHVQ…DVYQTAKPTR (686 aa)) the chain is on the extracellular side. Asparagine 122, asparagine 147, asparagine 219, and asparagine 289 each carry an N-linked (GlcNAc...) asparagine glycan. Residues 177-374 (QYIEMHVVVE…QKSQCLQNLP (198 aa)) enclose the Peptidase M12B domain. 3 cysteine pairs are disulfide-bonded: cysteine 286-cysteine 369, cysteine 328-cysteine 353, and cysteine 330-cysteine 335. 5 N-linked (GlcNAc...) asparagine glycosylation sites follow: asparagine 352, asparagine 434, asparagine 458, asparagine 559, and asparagine 566. In terms of domain architecture, Disintegrin spans 383–472 (DAVCGNSIVE…LCPDDIVIQN (90 aa)). Cysteine 444 and cysteine 464 are oxidised to a cystine. The EGF-like domain occupies 612-645 (VNLGCTLQNCNNQGICNSLQHCHCNPTFLPPNCS). 3 disulfide bridges follow: cysteine 616–cysteine 627, cysteine 621–cysteine 633, and cysteine 635–cysteine 644. N-linked (GlcNAc...) asparagine glycosylation occurs at asparagine 643. A helical transmembrane segment spans residues 703–723 (WPFFLLIPFFIILGALIAILV). Residues 724–751 (KVQFQRKKWKTEDYTSDEQFESDSELKE) lie on the Cytoplasmic side of the membrane. Phosphoserine is present on serine 745.

Heterodimer with ADAM1/fertilin subunit alpha. The signal and the metalloprotease domain are cleaved during the epididymal maturation of the spermatozoa. As to expression, expressed specifically in testis.

It is found in the membrane. Sperm surface membrane protein that may be involved in sperm-egg plasma membrane adhesion and fusion during fertilization. Could have a direct role in sperm-zona binding or migration of sperm from the uterus into the oviduct. Interactions with egg membrane could be mediated via binding between its disintegrin-like domain to one or more integrins receptors on the egg. This is a non catalytic metalloprotease-like protein. This is Disintegrin and metalloproteinase domain-containing protein 2 (ADAM2) from Oryctolagus cuniculus (Rabbit).